Reading from the N-terminus, the 555-residue chain is CTP synthase (555 aa).

The segment at 1-267 is amidoligase domain; that stretch reads MAKYIFVTGG…GNYLTLRLGL (267 aa). Ser13 contacts CTP. Ser13 contacts UTP. An ATP-binding site is contributed by 14 to 19; that stretch reads SVGKGI. Tyr54 serves as a coordination point for L-glutamine. Asp71 serves as a coordination point for ATP. The Mg(2+) site is built by Asp71 and Glu141. Residues 148-150, 188-193, and Lys224 contribute to the CTP site; these read DIE and KTKPTQ. Residues 188–193 and Lys224 each bind UTP; that span reads KTKPTQ. A Glutamine amidotransferase type-1 domain is found at 292–535; it reads AIALVGKYVE…IAAAAQTFRE (244 aa). Gly354 contacts L-glutamine. Cys381 functions as the Nucleophile; for glutamine hydrolysis in the catalytic mechanism. L-glutamine contacts are provided by residues 382 to 385, Glu406, and Arg463; that span reads LGMQ. Active-site residues include His508 and Glu510.

The protein belongs to the CTP synthase family. In terms of assembly, homotetramer.

It carries out the reaction UTP + L-glutamine + ATP + H2O = CTP + L-glutamate + ADP + phosphate + 2 H(+). The enzyme catalyses L-glutamine + H2O = L-glutamate + NH4(+). It catalyses the reaction UTP + NH4(+) + ATP = CTP + ADP + phosphate + 2 H(+). It functions in the pathway pyrimidine metabolism; CTP biosynthesis via de novo pathway; CTP from UDP: step 2/2. Allosterically activated by GTP, when glutamine is the substrate; GTP has no effect on the reaction when ammonia is the substrate. The allosteric effector GTP functions by stabilizing the protein conformation that binds the tetrahedral intermediate(s) formed during glutamine hydrolysis. Inhibited by the product CTP, via allosteric rather than competitive inhibition. Catalyzes the ATP-dependent amination of UTP to CTP with either L-glutamine or ammonia as the source of nitrogen. Regulates intracellular CTP levels through interactions with the four ribonucleotide triphosphates. The chain is CTP synthase from Roseiflexus castenholzii (strain DSM 13941 / HLO8).